An 80-amino-acid chain; its full sequence is Exodeoxyribonuclease 7 small subunit (80 aa).

The protein belongs to the XseB family. Heterooligomer composed of large and small subunits.

The protein resides in the cytoplasm. The enzyme catalyses Exonucleolytic cleavage in either 5'- to 3'- or 3'- to 5'-direction to yield nucleoside 5'-phosphates.. In terms of biological role, bidirectionally degrades single-stranded DNA into large acid-insoluble oligonucleotides, which are then degraded further into small acid-soluble oligonucleotides. The sequence is that of Exodeoxyribonuclease 7 small subunit from Vibrio campbellii (strain ATCC BAA-1116).